The sequence spans 545 residues: MSTHVPRRVALVTLGCSRNEVDSEELAGRLAAQGWELVADAADADAVLVNTCGFVDAAKKDSIDALLAADDLRAGDGEPAGAGPRAVVAVGCLAERYGNELAASLPEADAVLGFDAYPSIGEHLDAVLGGATVPAHTPRDRRTLLPITPVERGASANVAVHVPGHARGVAGGSAAGSPGRRRLTAGPVAALKISSGCDRRCAFCAIPSFRGSHVSRPADDVLAEAEWLAGEGARELVLVSENSTSYGKDLGDLRALEKLLPQLAAVPGIVRVRTVYLQPAELRPSLLEVLLTTPGLAPYLDLSFQHASPAVLRRMRRFGGSEHFLDLLDRGRGLLPGLGARSNVIVGFPGETEADVDILAEFLEAAELDAVGVFGYSDEEGTEAVSLPGKIAEEEIERRRVQITDLVEQLTATRAQERIGSRVQVLVEEITDGIAAGCAGHQQPDADGSCLVRLPGPAGAAAGPPAGGPSGTGQPGLPGQPGQPGVEVGDLIEARVVATEGVDLVAEFTAVLDRARPSAGRGEAAPSATGARATVLVGRPRADGT.

One can recognise an MTTase N-terminal domain in the interval 7-129 (RRVALVTLGC…IGEHLDAVLG (123 aa)). [4Fe-4S] cluster contacts are provided by Cys16, Cys52, Cys92, Cys197, Cys201, and Cys204. Residues 183–414 (LTAGPVAALK…DLVEQLTATR (232 aa)) form the Radical SAM core domain. The region spanning 416–510 (QERIGSRVQV…GVDLVAEFTA (95 aa)) is the TRAM domain. 2 disordered regions span residues 454 to 486 (LPGP…QPGV) and 516 to 545 (RPSA…ADGT). The segment covering 455 to 464 (PGPAGAAAGP) has biased composition (low complexity).

This sequence belongs to the methylthiotransferase family. RimO subfamily. [4Fe-4S] cluster is required as a cofactor.

The protein resides in the cytoplasm. It carries out the reaction L-aspartate(89)-[ribosomal protein uS12]-hydrogen + (sulfur carrier)-SH + AH2 + 2 S-adenosyl-L-methionine = 3-methylsulfanyl-L-aspartate(89)-[ribosomal protein uS12]-hydrogen + (sulfur carrier)-H + 5'-deoxyadenosine + L-methionine + A + S-adenosyl-L-homocysteine + 2 H(+). Its function is as follows. Catalyzes the methylthiolation of an aspartic acid residue of ribosomal protein uS12. This Frankia alni (strain DSM 45986 / CECT 9034 / ACN14a) protein is Ribosomal protein uS12 methylthiotransferase RimO.